Consider the following 141-residue polypeptide: Protein wingless (141 aa).

S3 carries the O-palmitoleoyl serine; by PORCN lipid modification. The span at 40–49 (TDLEAPTQRN) shows a compositional bias: polar residues. The interval 40 to 61 (TDLEAPTQRNDAAPHRAPRRER) is disordered. C107 and C122 are oxidised to a cystine. N-linked (GlcNAc...) asparagine glycans are attached at residues N108 and N138.

This sequence belongs to the Wnt family. Post-translationally, palmitoleoylated by porcupine. The lipid group functions as a sorting signal, targeting the ligand to polarized vesicles that transport wg to unique sites at the cell surface. Depalmitoleoylated by notum, leading to inhibit Wnt signaling pathway.

It is found in the secreted. Its subcellular location is the extracellular space. The protein localises to the extracellular matrix. Its function is as follows. Segment polarity protein. Binds to the frizzled seven-transmembrane receptors. This protein is probably a growth factor. The polypeptide is Protein wingless (WG) (Manduca sexta (Tobacco hawkmoth)).